The following is a 54-amino-acid chain: Small ribosomal subunit protein uS14 (54 aa).

The Zn(2+) site is built by cysteine 19, cysteine 22, cysteine 37, and cysteine 40.

This sequence belongs to the universal ribosomal protein uS14 family. Zinc-binding uS14 subfamily. As to quaternary structure, part of the 30S ribosomal subunit. The cofactor is Zn(2+).

In terms of biological role, binds 16S rRNA, required for the assembly of 30S particles. The chain is Small ribosomal subunit protein uS14 from Sulfolobus acidocaldarius (strain ATCC 33909 / DSM 639 / JCM 8929 / NBRC 15157 / NCIMB 11770).